The chain runs to 754 residues: LON peptidase N-terminal domain and RING finger protein 2 (754 aa).

TPR repeat units lie at residues 23–58 (IAQR…QPDR) and 59–91 (GLCL…GALR). Positions 112 to 136 (PLSAENPGGEPEAPGEGGPAPEPRA) are disordered. Positions 115-125 (AENPGGEPEAP) are enriched in low complexity. TPR repeat units lie at residues 197-230 (LRRL…APDD), 231-264 (NSLL…EPLL), and 266-298 (KGHQ…NPEC). The segment at 398 to 439 (GLKRQFPDDVEDAPDLNAPGKIPKKDLSLQRSPNSETEESQG) is disordered. Positions 426–439 (LQRSPNSETEESQG) are enriched in polar residues. Residues 447–483 (FECALCMRLLFEPVTTPCGHTFCLKCLERCLDHAPHC) form a TPR 6 repeat. Residues 449-487 (CALCMRLLFEPVTTPCGHTFCLKCLERCLDHAPHCPLCK) form an RING-type zinc finger. One can recognise a Lon N-terminal domain in the interval 528 to 737 (MSELSNLTRD…AIRRILVIIT (210 aa)).

The chain is LON peptidase N-terminal domain and RING finger protein 2 (LONRF2) from Homo sapiens (Human).